A 495-amino-acid polypeptide reads, in one-letter code: Aspartyl/glutamyl-tRNA(Asn/Gln) amidotransferase subunit B (495 aa).

This sequence belongs to the GatB/GatE family. GatB subfamily. Heterotrimer of A, B and C subunits.

It carries out the reaction L-glutamyl-tRNA(Gln) + L-glutamine + ATP + H2O = L-glutaminyl-tRNA(Gln) + L-glutamate + ADP + phosphate + H(+). The catalysed reaction is L-aspartyl-tRNA(Asn) + L-glutamine + ATP + H2O = L-asparaginyl-tRNA(Asn) + L-glutamate + ADP + phosphate + 2 H(+). In terms of biological role, allows the formation of correctly charged Asn-tRNA(Asn) or Gln-tRNA(Gln) through the transamidation of misacylated Asp-tRNA(Asn) or Glu-tRNA(Gln) in organisms which lack either or both of asparaginyl-tRNA or glutaminyl-tRNA synthetases. The reaction takes place in the presence of glutamine and ATP through an activated phospho-Asp-tRNA(Asn) or phospho-Glu-tRNA(Gln). The protein is Aspartyl/glutamyl-tRNA(Asn/Gln) amidotransferase subunit B of Rippkaea orientalis (strain PCC 8801 / RF-1) (Cyanothece sp. (strain PCC 8801)).